A 357-amino-acid polypeptide reads, in one-letter code: 3-dehydroquinate synthase (357 aa).

Residues 126–127 (TT), K139, and K148 contribute to the NAD(+) site. Zn(2+) is bound by residues E181, H244, and H261.

This sequence belongs to the sugar phosphate cyclases superfamily. Dehydroquinate synthase family. Co(2+) serves as cofactor. The cofactor is Zn(2+). It depends on NAD(+) as a cofactor.

It localises to the cytoplasm. It carries out the reaction 7-phospho-2-dehydro-3-deoxy-D-arabino-heptonate = 3-dehydroquinate + phosphate. The protein operates within metabolic intermediate biosynthesis; chorismate biosynthesis; chorismate from D-erythrose 4-phosphate and phosphoenolpyruvate: step 2/7. Catalyzes the conversion of 3-deoxy-D-arabino-heptulosonate 7-phosphate (DAHP) to dehydroquinate (DHQ). This Solibacter usitatus (strain Ellin6076) protein is 3-dehydroquinate synthase.